Consider the following 395-residue polypeptide: NKAP-like protein (395 aa).

Disordered stretches follow at residues 1–77 (MSPV…RPLP) and 91–247 (CGGY…ISCK). Residues S23 and S25 each carry the phosphoserine modification. Residues 25-35 (SPPSALQTSRS) are compositionally biased toward polar residues. The segment covering 109 to 130 (DQEKEKEESYRQRRLKERERIG) has biased composition (basic and acidic residues). S149 bears the Phosphoserine mark. Residues 150-161 (DEHTPAEDEVKN) show a composition bias toward basic and acidic residues. Basic residues-rich tracts occupy residues 177–197 (KTSHSTKKKRKKKPSKRKHKK) and 214–238 (KKVKTKKKEKKKKHRAKQLKKKRTK).

Belongs to the NKAP family. As to quaternary structure, interacts with RBPJ, CIR1 and HDAC3. Specific to testis (at protein level). Detected in differenting spermatogonia and early spermatocytes (at protein level).

The protein resides in the nucleus. Transcriptional repressor of Notch-mediated signaling. Required for spermatogenesis. In Mus musculus (Mouse), this protein is NKAP-like protein.